The primary structure comprises 54 residues: Small polypeptide DEVIL 12 (54 aa).

Residues 20–51 are required for DVL/RTFL small polypeptide activity; the sequence is NNKLTPNRSLKETRSRLYIIRRCLVMLLCWRE. N-linked (GlcNAc...) asparagine glycosylation occurs at asparagine 26. Residues 31–48 traverse the membrane as a helical segment; sequence ETRSRLYIIRRCLVMLLC.

Belongs to the DVL/RTFL small polypeptides family.

The protein localises to the cell membrane. Its function is as follows. Small polypeptide acting as a regulatory molecule which coordinates cellular responses required for differentiation, growth and development, probably by restricting polar cell proliferation in lateral organs and coordinating socket cell recruitment and differentiation at trichome sites. This chain is Small polypeptide DEVIL 12, found in Arabidopsis thaliana (Mouse-ear cress).